A 190-amino-acid chain; its full sequence is Guanylate kinase (190 aa).

In terms of domain architecture, Guanylate kinase-like spans Asn-3–Glu-185. Ala-10–Ser-17 contacts ATP.

This sequence belongs to the guanylate kinase family.

The protein localises to the cytoplasm. The catalysed reaction is GMP + ATP = GDP + ADP. Functionally, essential for recycling GMP and indirectly, cGMP. This Francisella tularensis subsp. holarctica (strain LVS) protein is Guanylate kinase.